The sequence spans 643 residues: Translation factor GUF1, mitochondrial (643 aa).

Residues 1–18 constitute a mitochondrion transit peptide; sequence MLASQAIKRIFHRSWKPL. Residues 43 to 226 enclose the tr-type G domain; that stretch reads ENYRNFSIVA…AIIDRIPPPT (184 aa). Residues 52 to 59, 118 to 122, and 172 to 175 contribute to the GTP site; these read AHIDHGKS, DTPGH, and NKID.

The protein belongs to the TRAFAC class translation factor GTPase superfamily. Classic translation factor GTPase family. LepA subfamily.

The protein resides in the mitochondrion inner membrane. It carries out the reaction GTP + H2O = GDP + phosphate + H(+). Promotes mitochondrial protein synthesis. May act as a fidelity factor of the translation reaction, by catalyzing a one-codon backward translocation of tRNAs on improperly translocated ribosomes. Binds to mitochondrial ribosomes in a GTP-dependent manner. The sequence is that of Translation factor GUF1, mitochondrial from Zygosaccharomyces rouxii (strain ATCC 2623 / CBS 732 / NBRC 1130 / NCYC 568 / NRRL Y-229).